The sequence spans 797 residues: Protocadherin-3 (797 aa).

The first 30 residues, 1 to 30 (METALAKIPQQRQVFFLTILSLLWKSSSEA), serve as a signal peptide directing secretion. At 31–691 (IRYSMPEETE…DNYDVLTLYL (661 aa)) the chain is on the extracellular side. Cadherin domains lie at 35–133 (MPEE…SPEF), 138–242 (MLLT…SPQF), 247–346 (YKVQ…APEL), 351–450 (LTVL…APAF), and 455–560 (YTMF…APFV). N-linked (GlcNAc...) asparagine glycosylation is found at asparagine 169, asparagine 276, and asparagine 417. N-linked (GlcNAc...) asparagine glycosylation is present at asparagine 566. Residues 567 to 670 (ASAPCTELLP…VVDGFSQPYL (104 aa)) form the Cadherin 6 domain. Residues 692–712 (VIALASVSSLFLLSVVLFVGV) form a helical membrane-spanning segment. Residues 713–797 (RLCRRAREAS…AVVHNSVGFY (85 aa)) are Cytoplasmic-facing.

Expressed in brain.

The protein localises to the cell membrane. Functionally, potential calcium-dependent cell-adhesion protein. May be involved in the establishment and maintenance of specific neuronal connections in the brain. The chain is Protocadherin-3 (Pcdh3) from Rattus norvegicus (Rat).